The chain runs to 193 residues: Pilin-like protein PilA2 (193 aa).

The propeptide at 1 to 4 is leader sequence; it reads MRKG. An N-methylleucine modification is found at leucine 5. Residues 5-25 traverse the membrane as a helical segment; it reads LTLVEVLVTLVIMGIAFAALL.

It localises to the cell inner membrane. The protein localises to the cell outer membrane. Its subcellular location is the periplasm. In terms of biological role, plays an essential role in natural DNA transformation but is not required for pilus biogenesis. The chain is Pilin-like protein PilA2 (pilA2) from Thermus thermophilus (strain ATCC BAA-163 / DSM 7039 / HB27).